A 103-amino-acid chain; its full sequence is Small ribosomal subunit protein uS10 (103 aa).

Residues 35–59 (LSGPVPLPTKTLEVPSRKSPDGEGT) are disordered.

The protein belongs to the universal ribosomal protein uS10 family. Part of the 30S ribosomal subunit.

Its function is as follows. Involved in the binding of tRNA to the ribosomes. In Haloarcula marismortui (strain ATCC 43049 / DSM 3752 / JCM 8966 / VKM B-1809) (Halobacterium marismortui), this protein is Small ribosomal subunit protein uS10 (rps10).